The sequence spans 376 residues: Succinyl-diaminopimelate desuccinylase (376 aa).

Position 67 (histidine 67) interacts with Zn(2+). Aspartate 69 is an active-site residue. Aspartate 100 provides a ligand contact to Zn(2+). Residue glutamate 134 is the Proton acceptor of the active site. 3 residues coordinate Zn(2+): glutamate 135, glutamate 163, and histidine 349.

This sequence belongs to the peptidase M20A family. DapE subfamily. As to quaternary structure, homodimer. Zn(2+) serves as cofactor. Co(2+) is required as a cofactor.

It catalyses the reaction N-succinyl-(2S,6S)-2,6-diaminopimelate + H2O = (2S,6S)-2,6-diaminopimelate + succinate. The protein operates within amino-acid biosynthesis; L-lysine biosynthesis via DAP pathway; LL-2,6-diaminopimelate from (S)-tetrahydrodipicolinate (succinylase route): step 3/3. Catalyzes the hydrolysis of N-succinyl-L,L-diaminopimelic acid (SDAP), forming succinate and LL-2,6-diaminopimelate (DAP), an intermediate involved in the bacterial biosynthesis of lysine and meso-diaminopimelic acid, an essential component of bacterial cell walls. This is Succinyl-diaminopimelate desuccinylase from Nitrosomonas europaea (strain ATCC 19718 / CIP 103999 / KCTC 2705 / NBRC 14298).